The chain runs to 262 residues: Acyl-coenzyme A diphosphatase FITM2 (262 aa).

The Cytoplasmic portion of the chain corresponds to 1–23 (MEHLERCAWFLRGTLVRATVRRH). Residues 24 to 44 (LPWALVAAMLAGSVVKELSPL) form a helical membrane-spanning segment. Residues 45–57 (PESYLSNKRNVLN) lie on the Lumenal side of the membrane. Residues 58–78 (VYFVKLAWAWTVCLLLPFIAL) traverse the membrane as a helical segment. At 79 to 93 (TNYHLTGKTSLVLRR) the chain is on the cytoplasmic side. A helical membrane pass occupies residues 94–114 (LSTLLVGTAIWYICTALFSNI). Topologically, residues 115–145 (EHYTGSCYQSPALEGIRQEHRSKQQCHREGG) are lumenal. A helical membrane pass occupies residues 146 to 166 (FWHGFDISGHSFLLTFCALMI). The active site involves histidine 155. Residues 167–190 (VEEMAVLHEVKTDRGHHLHAAITT) are Cytoplasmic-facing. The chain crosses the membrane as a helical span at residues 191–211 (LVVALGFLTFIWVWMFLCTAV). The Lumenal portion of the chain corresponds to 212–218 (YFHDLTQ). Residue histidine 214 is part of the active site. The chain crosses the membrane as a helical span at residues 219 to 239 (KVFGTMFGLLGWYGTYGYWYL). The Cytoplasmic segment spans residues 240 to 262 (KSFSPGLPPQSCSLTLKRDTYKK).

It belongs to the FIT family. As to expression, widely expressed, with highest levels in white and brown adipose tissues (at protein level). In the heart, mRNA expression levels do not correlate well with protein levels, suggesting post-transcriptional regulation in this organ.

The protein localises to the endoplasmic reticulum membrane. It catalyses the reaction an acyl-CoA + H2O = an acyl-4'-phosphopantetheine + adenosine 3',5'-bisphosphate + 2 H(+). It carries out the reaction (9Z)-octadecenoyl-CoA + H2O = S-(9Z-octadecenoyl)-4'-phosphopantetheine + adenosine 3',5'-bisphosphate + 2 H(+). The enzyme catalyses (5Z,8Z,11Z,14Z)-eicosatetraenoyl-CoA + H2O = S-(5Z,8Z,11Z,14Z-eicosatetraenoyl)-4'-phosphopantetheine + adenosine 3',5'-bisphosphate + 2 H(+). The catalysed reaction is hexadecanoyl-CoA + H2O = S-hexadecanoyl-4'-phosphopantetheine + adenosine 3',5'-bisphosphate + 2 H(+). Fatty acyl-coenzyme A (CoA) diphosphatase that hydrolyzes fatty acyl-CoA to yield acyl-4'-phosphopantetheine and adenosine 3',5'-bisphosphate. Preferentially hydrolyzes unsaturated long-chain acyl-CoA substrates such as oleoyl-CoA/(9Z)-octadecenoyl-CoA and arachidonoyl-CoA/(5Z,8Z,11Z,14Z)-eicosatetraenoyl-CoA in the endoplasmic reticulum (ER) lumen. This catalytic activity is required for maintaining ER structure and for lipid droplets (LDs) biogenesis, which are lipid storage organelles involved in maintaining lipid and energy homeostasis. Directly binds to diacylglycerol (DAGs) and triacylglycerol, which is also important for LD biogenesis. May support directional budding of nacent LDs from the ER into the cytosol by reducing DAG levels at sites of LD formation. Plays a role in the regulation of cell morphology and cytoskeletal organization. The sequence is that of Acyl-coenzyme A diphosphatase FITM2 from Mus musculus (Mouse).